The sequence spans 35 residues: Photosystem II reaction center protein T (35 aa).

A helical membrane pass occupies residues 3–23 (ALVYTFLLVSTLGIIFFAIFF).

The protein belongs to the PsbT family. PSII is composed of 1 copy each of membrane proteins PsbA, PsbB, PsbC, PsbD, PsbE, PsbF, PsbH, PsbI, PsbJ, PsbK, PsbL, PsbM, PsbT, PsbY, PsbZ, Psb30/Ycf12, at least 3 peripheral proteins of the oxygen-evolving complex and a large number of cofactors. It forms dimeric complexes.

It is found in the plastid. The protein resides in the chloroplast thylakoid membrane. Found at the monomer-monomer interface of the photosystem II (PS II) dimer, plays a role in assembly and dimerization of PSII. PSII is a light-driven water plastoquinone oxidoreductase, using light energy to abstract electrons from H(2)O, generating a proton gradient subsequently used for ATP formation. The chain is Photosystem II reaction center protein T from Pisum sativum (Garden pea).